A 70-amino-acid polypeptide reads, in one-letter code: Small ribosomal subunit protein bS21A (70 aa).

It belongs to the bacterial ribosomal protein bS21 family.

The chain is Small ribosomal subunit protein bS21A from Burkholderia orbicola (strain AU 1054).